We begin with the raw amino-acid sequence, 399 residues long: Sister chromatid cohesion protein DCC1 (399 aa).

Belongs to the DCC1 family. In terms of assembly, component of the CTF18-RFC complex which consists of CTF8, CTF18, DSCC1 and the RFC complex. Interacts with CTF8 and CTF18. Interacts with DDX11.

It is found in the nucleus. Loads PCNA onto primed templates regulating velocity, spacing and restart activity of replication forks. May couple DNA replication to sister chromatid cohesion through regulation of the acetylation of the cohesin subunit SMC3. The sequence is that of Sister chromatid cohesion protein DCC1 (DSCC1) from Mus musculus (Mouse).